Here is a 977-residue protein sequence, read N- to C-terminus: Collagen alpha-2(I) chain (977 aa).

A disordered region spans residues 1 to 977 (SGGFDFSFLP…RGSQGSQGPS (977 aa)). 4 positions are modified to 4-hydroxyproline: P10, P13, P28, and P34. The span at 17–66 (GPMGLMGPRGPPGASGAPGPQGFQGPAGEPGEPGQTGPAGARGPAGPPGK) shows a compositional bias: low complexity. Position 91 is a 5-hydroxylysine; alternate (K91). A glycan (O-linked (Gal...) hydroxylysine; alternate) is linked at K91. 2 stretches are compositionally biased toward low complexity: residues 138–159 (SRGSDGSVGPVGPAGPIGSAGP) and 205–226 (PGANGLTGAKGAAGLPGVAGAP). A compositionally biased stretch (gly residues) spans 258–267 (GESGGKGEPG). Positions 268–278 (SAGPQGPPGSS) are enriched in low complexity. Residues 300–309 (GLRGGPGSRG) show a composition bias toward gly residues. Residues 322 to 338 (PAGARGASGPAGVRGPS) show a composition bias toward low complexity. Residues P344 and P347 each carry the 4-hydroxyproline modification. Residues 373–392 (LPGIDGRPGPIGPAGARGEA) show a composition bias toward low complexity. Gly residues predominate over residues 441 to 450 (GVQGGKGEQG). 2 stretches are compositionally biased toward low complexity: residues 497–514 (SGESGAVGPSGAIGSRGP) and 526–536 (EPGVVGAPGTA). Over residues 537–546 (GPAGSGGLPG) the composition is skewed to gly residues. Composition is skewed to low complexity over residues 569-605 (VGTTGRDGARGAPGAVGAPGPAGATGDRGEAGAAGPA) and 620-640 (VGPAGPNGFAGPAGAAGQPGA). A compositionally biased stretch (basic and acidic residues) spans 641–650 (KGERGTKGPK). Residues 658–668 (PTGPVGSAGPA) are compositionally biased toward low complexity. Gly residues predominate over residues 678 to 687 (GSRGDGGPPG). The span at 689–698 (TGFPGAAGRT) shows a compositional bias: low complexity. Residues 735–744 (GETGAGGPPG) show a composition bias toward gly residues. 2 stretches are compositionally biased toward low complexity: residues 752 to 779 (SGEPGTAGPPGTAGPQGLLGAPGILGLP) and 787 to 797 (LPGVAGAVGEP). Positions 798–817 (GPLGIGPPGARGPSGAGVNG) are enriched in gly residues. Low complexity-rich tracts occupy residues 853 to 871 (PVGAAGAPGPHGAVGPAGK) and 878 to 898 (PGPAGSVGPVGAVGPRGPSGP). The segment covering 902–913 (RGDKGEAGDKGP) has biased composition (basic and acidic residues).

Belongs to the fibrillar collagen family. Trimers of one alpha 2(I) and two alpha 1(I) chains. Interacts (via C-terminus) with TMEM131 (via PapD-L domain); the interaction is direct and is involved in assembly and TRAPPIII ER-to-Golgi transport complex-dependent secretion of collagen. In terms of processing, prolines at the third position of the tripeptide repeating unit (G-X-Y) are hydroxylated in some or all of the chains. In terms of tissue distribution, expressed in bones.

The protein resides in the secreted. It localises to the extracellular space. The protein localises to the extracellular matrix. In terms of biological role, type I collagen is a member of group I collagen (fibrillar forming collagen). The protein is Collagen alpha-2(I) chain of Scelidodon sp. (strain SLP-2019) (South American ground sloth).